The chain runs to 198 residues: Pyridoxine/pyridoxamine 5'-phosphate oxidase 2 (198 aa).

Residues arginine 42, 59-60 (NT), lysine 66, and 121-122 (RS) contribute to the FMN site.

This sequence belongs to the pyridoxamine 5'-phosphate oxidase family. In terms of assembly, homodimer. FMN serves as cofactor.

It carries out the reaction pyridoxamine 5'-phosphate + O2 + H2O = pyridoxal 5'-phosphate + H2O2 + NH4(+). The catalysed reaction is pyridoxine 5'-phosphate + O2 = pyridoxal 5'-phosphate + H2O2. The protein operates within cofactor metabolism; pyridoxal 5'-phosphate salvage; pyridoxal 5'-phosphate from pyridoxamine 5'-phosphate: step 1/1. Its pathway is cofactor metabolism; pyridoxal 5'-phosphate salvage; pyridoxal 5'-phosphate from pyridoxine 5'-phosphate: step 1/1. In terms of biological role, catalyzes the oxidation of either pyridoxine 5'-phosphate (PNP) or pyridoxamine 5'-phosphate (PMP) into pyridoxal 5'-phosphate (PLP). Has an in vitro catalytic efficiency for PNP approximately 300-fold lower than that of PPOX1. The protein is Pyridoxine/pyridoxamine 5'-phosphate oxidase 2 (PPOX2) of Arabidopsis thaliana (Mouse-ear cress).